Reading from the N-terminus, the 270-residue chain is 5'-AMP-activated protein kinase subunit beta-1 (270 aa).

Positions 1-46 are disordered; it reads MGNTSSERAALERHGGHKTPRRDSSGGTKDGDRPKILMDSPEDADL. G2 carries N-myristoyl glycine lipidation. A Phosphothreonine modification is found at T4. Phosphoserine occurs at positions 5 and 6. T19 is subject to Phosphothreonine. Residues 21–36 are compositionally biased toward basic and acidic residues; sequence RRDSSGGTKDGDRPKI. Phosphoserine; by autocatalysis occurs at positions 24 and 25. Residues S40, S96, and S101 each carry the phosphoserine modification. The glycogen-binding domain stretch occupies residues 68 to 163; that stretch reads EVNDKAPAQA…QVKKTDFEVF (96 aa). S108 is modified (phosphoserine; by autocatalysis). The residue at position 148 (T148) is a Phosphothreonine. A Phosphoserine modification is found at S182.

It belongs to the 5'-AMP-activated protein kinase beta subunit family. As to quaternary structure, AMPK is a heterotrimer of an alpha catalytic subunit (PRKAA1 or PRKAA2), a beta (PRKAB1 or PRKAB2) and a gamma non-catalytic subunits (PRKAG1, PRKAG2 or PRKAG3). Interacts with FNIP1 and FNIP2. Phosphorylated when associated with the catalytic subunit (PRKAA1 or PRKAA2). Phosphorylated by ULK1; leading to negatively regulate AMPK activity and suggesting the existence of a regulatory feedback loop between ULK1 and AMPK.

Functionally, non-catalytic subunit of AMP-activated protein kinase (AMPK), an energy sensor protein kinase that plays a key role in regulating cellular energy metabolism. In response to reduction of intracellular ATP levels, AMPK activates energy-producing pathways and inhibits energy-consuming processes: inhibits protein, carbohydrate and lipid biosynthesis, as well as cell growth and proliferation. AMPK acts via direct phosphorylation of metabolic enzymes, and by longer-term effects via phosphorylation of transcription regulators. Also acts as a regulator of cellular polarity by remodeling the actin cytoskeleton; probably by indirectly activating myosin. Beta non-catalytic subunit acts as a scaffold on which the AMPK complex assembles, via its C-terminus that bridges alpha (PRKAA1 or PRKAA2) and gamma subunits (PRKAG1, PRKAG2 or PRKAG3). The polypeptide is 5'-AMP-activated protein kinase subunit beta-1 (PRKAB1) (Pongo abelii (Sumatran orangutan)).